Consider the following 262-residue polypeptide: Probable carboxylesterase SOBER1-like (262 aa).

Residues Ser-151, Asp-205, and His-237 each act as charge relay system in the active site.

The protein belongs to the AB hydrolase superfamily. AB hydrolase 2 family.

In terms of biological role, carboxylesterase. The sequence is that of Probable carboxylesterase SOBER1-like from Arabidopsis thaliana (Mouse-ear cress).